A 511-amino-acid chain; its full sequence is Putative thymidine phosphorylase (511 aa).

It belongs to the thymidine/pyrimidine-nucleoside phosphorylase family. Type 2 subfamily.

It carries out the reaction thymidine + phosphate = 2-deoxy-alpha-D-ribose 1-phosphate + thymine. This chain is Putative thymidine phosphorylase, found in Bradyrhizobium sp. (strain BTAi1 / ATCC BAA-1182).